Reading from the N-terminus, the 460-residue chain is Argininosuccinate lyase (460 aa).

This sequence belongs to the lyase 1 family. Argininosuccinate lyase subfamily.

Its subcellular location is the cytoplasm. It carries out the reaction 2-(N(omega)-L-arginino)succinate = fumarate + L-arginine. It participates in amino-acid biosynthesis; L-arginine biosynthesis; L-arginine from L-ornithine and carbamoyl phosphate: step 3/3. The polypeptide is Argininosuccinate lyase (Alkaliphilus metalliredigens (strain QYMF)).